The chain runs to 226 residues: MKKAVVLLSGGLDSTTVLYLAKSQGYEVYAMSFDYGQRHKKEIQCARDVASGTGAADFVLVTTNMNAWGGSALTDNSIKVPEFNEESEKIPVTYVPARNMIFLSYAASYAETIGAYDIFIGVSEVDYSGYVDCRHEFIDSMEKTINLGTVCAVEHKKYIKIHAPFLYKTKSEEIKIGMDLGVKYEKTWTCYNGEEFACGICDSCRLRLEAFKEAGYKDPIKYKGEK.

8 to 18 is a binding site for ATP; that stretch reads LSGGLDSTTVL. C190, C198, C201, and C204 together coordinate Zn(2+).

This sequence belongs to the QueC family. As to quaternary structure, homodimer. The cofactor is Zn(2+).

The enzyme catalyses 7-carboxy-7-deazaguanine + NH4(+) + ATP = 7-cyano-7-deazaguanine + ADP + phosphate + H2O + H(+). It participates in purine metabolism; 7-cyano-7-deazaguanine biosynthesis. Catalyzes the ATP-dependent conversion of 7-carboxy-7-deazaguanine (CDG) to 7-cyano-7-deazaguanine (preQ(0)). The sequence is that of 7-cyano-7-deazaguanine synthase from Clostridium kluyveri (strain ATCC 8527 / DSM 555 / NBRC 12016 / NCIMB 10680 / K1).